We begin with the raw amino-acid sequence, 237 residues long: Cyclic-di-GMP-binding biofilm dispersal mediator protein (237 aa).

10–34 (LILGGSRGIGAAIVRRFVTDGANVR) is a binding site for NAD(+). Serine 132 is a substrate binding site. Tyrosine 146 serves as the catalytic Proton acceptor.

The protein belongs to the short-chain dehydrogenases/reductases (SDR) family.

In terms of biological role, increases biofilm dispersal. Acts by binding directly to the signaling molecule cyclic-di-GMP, which decreases the intracellular concentration of cyclic-di-GMP and leads to biofilm dispersal. Also controls other biofilm-related phenotypes such as cell motility, cell size, cell aggregation and production of extracellular DNA and extracellular polysaccharides (EPS). Does not act as a phosphodiesterase. The chain is Cyclic-di-GMP-binding biofilm dispersal mediator protein (bdcA) from Escherichia coli (strain K12).